A 193-amino-acid chain; its full sequence is MRLCDRDIEAWLDEGRLSINPRPPVERINGATVDVRLGNKFRTFRGHTAAFIDLSGPKDEVSAALDRVMSDEIVLDEGEAFYLHPGELALAVTLESVTLPADLVGWLDGRSSLARLGLMVHVTAHRIDPGWSGCIVLEFYNSGKLPLALRPGMLIGALSFEPLSGPAARPYNRREDAKYRNQQGAVASRIDKD.

DCTP contacts are provided by residues 110 to 115 (RSSLAR), Asp-128, 136 to 138 (VLE), Tyr-171, Lys-178, and Gln-182. Glu-138 acts as the Proton donor/acceptor in catalysis. Residues 169 to 193 (RPYNRREDAKYRNQQGAVASRIDKD) are disordered.

Belongs to the dCTP deaminase family. In terms of assembly, homotrimer.

The catalysed reaction is dCTP + H2O + H(+) = dUTP + NH4(+). It functions in the pathway pyrimidine metabolism; dUMP biosynthesis; dUMP from dCTP (dUTP route): step 1/2. Its function is as follows. Catalyzes the deamination of dCTP to dUTP. This is dCTP deaminase from Escherichia coli O8 (strain IAI1).